The following is a 182-amino-acid chain: UPF0397 protein SPP_0507 (182 aa).

5 helical membrane-spanning segments follow: residues 10 to 30 (VVAV…NIPT), 46 to 66 (LLSI…GHAI), 73 to 93 (YGLW…VGLF), 109 to 129 (ILIF…VLAP), and 148 to 168 (IVAG…LLLA).

This sequence belongs to the UPF0397 family.

Its subcellular location is the cell membrane. This is UPF0397 protein SPP_0507 from Streptococcus pneumoniae (strain P1031).